A 297-amino-acid chain; its full sequence is Protoheme IX farnesyltransferase 1 (297 aa).

9 helical membrane passes run 23-43 (VVVL…RAGV), 45-65 (WSVL…AAAV), 93-113 (LPAL…LLMF), 117-137 (LTAW…TGFL), 145-165 (IVIG…AVSG), 171-191 (PLLL…ALAI), 216-236 (LHIL…YAIH), 241-261 (LYLV…WVLY), and 277-297 (IGYL…LLNL).

Belongs to the UbiA prenyltransferase family. Protoheme IX farnesyltransferase subfamily.

The protein localises to the cell inner membrane. The catalysed reaction is heme b + (2E,6E)-farnesyl diphosphate + H2O = Fe(II)-heme o + diphosphate. Its pathway is porphyrin-containing compound metabolism; heme O biosynthesis; heme O from protoheme: step 1/1. Its function is as follows. Converts heme B (protoheme IX) to heme O by substitution of the vinyl group on carbon 2 of heme B porphyrin ring with a hydroxyethyl farnesyl side group. This chain is Protoheme IX farnesyltransferase 1, found in Pseudomonas putida (strain W619).